The primary structure comprises 106 residues: MTSRAKKRIVLPTRPEPPSIEQILQDVHGAIASDPVFICDFSDDSSLSNNATLCEKEKQYWQSCNYVDMNNKLKEALIQLKAKCDVLRSAGEKLEEDIENLREATM.

This sequence belongs to the UPF0449 family.

This is UPF0449 protein C19orf25 homolog from Xenopus tropicalis (Western clawed frog).